The sequence spans 690 residues: Tripartite terminase subunit 3 (690 aa).

Positions 226-233 (IPRRHGKT) match the Walker A motif motif. Residues 321–326 (LLFVDE) carry the Walker B motif motif. The For ATPase activity role is filled by glutamate 326. Active-site for nuclease activity residues include aspartate 481, glutamate 555, and aspartate 667.

The protein belongs to the herpesviridae TRM3 protein family. In terms of assembly, interacts with the terminase subunits TRM1 and TRM2. Interacts with portal protein.

The protein resides in the host nucleus. Component of the molecular motor that translocates viral genomic DNA in empty capsid during DNA packaging. Forms a tripartite terminase complex together with TRM1 and TRM2 in the host cytoplasm. Once the complex reaches the host nucleus, it interacts with the capsid portal vertex. This portal forms a ring in which genomic DNA is translocated into the capsid. TRM3 carries an RNase H-like nuclease activity that plays an important role for the cleavage of concatemeric viral DNA into unit length genomes. This chain is Tripartite terminase subunit 3, found in Homo sapiens (Human).